The sequence spans 146 residues: Aminoglycoside N(6')-acetyltransferase type 1 (146 aa).

The N-acetyltransferase domain occupies 1–146 (MNIMPISESQ…RVVYFKKNIG (146 aa)). W22, H25, Y66, and E79 together coordinate substrate. 81-83 (IFV) is an acetyl-CoA binding site. D115 provides a ligand contact to substrate. N120 provides a ligand contact to acetyl-CoA. E136 provides a ligand contact to substrate.

As to quaternary structure, homodimer.

It catalyses the reaction kanamycin B + acetyl-CoA = N(6')-acetylkanamycin B + CoA + H(+). Catalyzes the transfer of an acetyl group from acetyl-CoA to the 6'-amino group of aminoglycoside molecules conferring resistance to antibiotics containing the purpurosamine ring including amikacin, kanamycin, tobramycin and netilmicin. This is Aminoglycoside N(6')-acetyltransferase type 1 from Acinetobacter baumannii.